Here is a 242-residue protein sequence, read N- to C-terminus: Dehydration-responsive element-binding protein 1J (242 aa).

Residues 20 to 29 show a composition bias toward low complexity; sequence SSATTAATAT. The segment at 20–44 is disordered; sequence SSATTAATATGPASPKRPAGRTKFQ. Residues 50 to 109 constitute a DNA-binding region (AP2/ERF); it reads VFRGVRRRGRAGRWVCEVRVPGSRGDRLWVGTFDTAEEAARAHDAAMLAMCGASASLNFT. A disordered region spans residues 143-184; sequence FQRRGSTAATATATSGDAASTAPPSSSPVLSPNDDNASSAST. Over residues 148–184 the composition is skewed to low complexity; it reads STAATATATSGDAASTAPPSSSPVLSPNDDNASSAST.

It belongs to the AP2/ERF transcription factor family. ERF subfamily.

It localises to the nucleus. Functionally, transcriptional activator that binds specifically to the DNA sequence 5'-[AG]CCGAC-3'. Binding to the C-repeat/DRE element mediates high salinity- and dehydration-inducible transcription. The polypeptide is Dehydration-responsive element-binding protein 1J (DREB1J) (Oryza sativa subsp. indica (Rice)).